We begin with the raw amino-acid sequence, 575 residues long: Hemagglutinin-neuraminidase (575 aa).

The segment covering Met1–Ser10 has biased composition (basic and acidic residues). A disordered region spans residues Met1–Ser25. Over Met1 to Leu37 the chain is Intravirion. Residues Ser10–Thr14 are incorporation in virion. The span at Tyr11 to Val24 shows a compositional bias: polar residues. Residues Leu38–Ile58 traverse the membrane as a helical segment. Positions Ala59–Ser140 are involved in interaction with F protein. At Ala59–Ser575 the chain is on the virion surface side. The N-linked (GlcNAc...) asparagine; by host glycan is linked to Asn77. Intrachain disulfides connect Cys192–Cys216, Cys258–Cys271, Cys357–Cys469, and Cys463–Cys473. The involved in neuraminidase activity stretch occupies residues Asn254–Ser259. N-linked (GlcNAc...) asparagine; by host glycans are attached at residues Asn499 and Asn511. A disulfide bridge links Cys535 with Cys544.

The protein belongs to the paramyxoviruses hemagglutinin-neuraminidase family. In terms of assembly, homotetramer; composed of disulfide-linked homodimers. Interacts with F protein trimer. In terms of processing, N-glycosylated; glycans consist of a mixture of high mannose-type oligosaccharides and of complex-type oligosaccharides.

The protein localises to the virion membrane. It is found in the host cell membrane. It catalyses the reaction Hydrolysis of alpha-(2-&gt;3)-, alpha-(2-&gt;6)-, alpha-(2-&gt;8)- glycosidic linkages of terminal sialic acid residues in oligosaccharides, glycoproteins, glycolipids, colominic acid and synthetic substrates.. In terms of biological role, attaches the virus to sialic acid-containing cell receptors and thereby initiating infection. Binding of HN protein to the receptor induces a conformational change that allows the F protein to trigger virion/cell membranes fusion. Neuraminidase activity ensures the efficient spread of the virus by dissociating the mature virions from the neuraminic acid containing glycoproteins. The sequence is that of Hemagglutinin-neuraminidase (HN) from Cavia cutleri (Guinea pig).